We begin with the raw amino-acid sequence, 397 residues long: Efflux pump periplasmic linker BepD (397 aa).

The first 26 residues, 1 to 26 (MTLNRTIRCFAAGAAFIVFAAQPALA), serve as a signal peptide directing secretion. Residues 98–139 (APYQAELEKAQAQVAQAEAQYQQSIRDAERAEQLVQQKVQSA) adopt a coiled-coil conformation.

Belongs to the membrane fusion protein (MFP) (TC 8.A.1) family. As to quaternary structure, probably part of a tripartite efflux pump, which is composed of an outer membrane efflux protein, an inner membrane protein and a protein that expands the periplasmic space. Could form a tripartite pump with BepC and BepE.

The protein resides in the periplasm. In terms of biological role, involved in resistance to several unrelated toxic compounds, such as dyes, detergents and antibiotics. This is Efflux pump periplasmic linker BepD (bepD) from Brucella suis biovar 1 (strain 1330).